The sequence spans 282 residues: Undecaprenyl-diphosphatase (282 aa).

7 consecutive transmembrane segments (helical) span residues 40–60, 87–107, 116–136, 153–173, 196–216, 229–249, and 256–276; these read GAAFSAIVQIGTLAAVLIYFY, MGWMIAAGTMPIVILGLLFKT, LYWISVALIVLALMLTLAEWL, IGWKEALLIGLAQSIALIPGS, FSFLLSLPAVFAAGIYQLYET, NLAVATLFAGIVGYASIAFLI, and STALFILYRIALGVGILGLIA.

The protein belongs to the UppP family.

The protein localises to the cell inner membrane. It catalyses the reaction di-trans,octa-cis-undecaprenyl diphosphate + H2O = di-trans,octa-cis-undecaprenyl phosphate + phosphate + H(+). Functionally, catalyzes the dephosphorylation of undecaprenyl diphosphate (UPP). Confers resistance to bacitracin. This chain is Undecaprenyl-diphosphatase, found in Chlorobium phaeobacteroides (strain BS1).